The chain runs to 813 residues: Histone acetyltransferase KAT2B (813 aa).

2 disordered regions span residues 1 to 55 (MAEA…GGSA) and 380 to 423 (NSTS…EAKR). The span at 32–46 (ASCGPATAVAAAGTA) shows a compositional bias: low complexity. A compositionally biased stretch (polar residues) spans 380–391 (NSTSHEQINGGR). Residues 406 to 423 (PGEKRKMNNSHAPEEAKR) are compositionally biased toward basic and acidic residues. The 149-residue stretch at 484 to 632 (LNQKPNKKIL…GATLMGCELN (149 aa)) folds into the N-acetyltransferase domain. Residue glutamate 551 is the Proton donor/acceptor of the active site. Residues 555–557 (CAV), 562–568 (QVKGYGT), and 593–596 (YAIG) contribute to the acetyl-CoA site. In terms of domain architecture, Bromo spans 704 to 808 (KDPEQLYSTL…KFFFSKIKEA (105 aa)).

This sequence belongs to the acetyltransferase family. GCN5 subfamily. In terms of assembly, interacts with BCAS3. Interacts with SIRT1. Interacts with EP300, CREBBP and DDX17. Component of a large chromatin remodeling complex, at least composed of MYSM1, KAT2B/PCAF, RBM10 and KIF11/TRIP5. Interacts with KLF1; the interaction does not acetylate KLF1 and there is no enhancement of its transactivational activity. Interacts with NFE4. Interacts with MECOM. Interacts with NR2C2 (hypophosphorylated and unsumoylated form); the interaction promotes the transactivation activity of NR2C2. Interacts with NFE4. Interacts with MECOM. Interacts with E2F1; the interaction acetylates E2F1 augmenting its DNA-binding and transcriptional activity. Interacts with NPAS2, BMAL1 and CLOCK. Interacts (unsumoylated form) with NR2C1; the interaction promotes transactivation activity. Interacts with CEBPB. Interacts with NR4A3. Interacts with TBX5. Interacts with PLK4. Interacts with RB1; this interaction leads to RB1 acetylation. Interacts with VRK1.

The protein resides in the nucleus. Its subcellular location is the cytoplasm. It localises to the cytoskeleton. It is found in the microtubule organizing center. The protein localises to the centrosome. The catalysed reaction is L-lysyl-[histone] + acetyl-CoA = N(6)-acetyl-L-lysyl-[histone] + CoA + H(+). The enzyme catalyses L-lysyl-[protein] + acetyl-CoA = N(6)-acetyl-L-lysyl-[protein] + CoA + H(+). It catalyses the reaction spermidine + acetyl-CoA = N(8)-acetylspermidine + CoA + H(+). In terms of biological role, functions as a histone acetyltransferase (HAT) to promote transcriptional activation. Has significant histone acetyltransferase activity with core histones (H3 and H4), and also with nucleosome core particles. Has a a strong preference for acetylation of H3 at 'Lys-9' (H3K9ac). Also acetylates non-histone proteins, such as ACLY, MAPRE1/EB1, PLK4, RRP9/U3-55K and TBX5. Acts as a circadian transcriptional coactivator which enhances the activity of the circadian transcriptional activators: NPAS2-BMAL1 and CLOCK-BMAL1 heterodimers. Involved in heart and limb development by mediating acetylation of TBX5, acetylation regulating nucleocytoplasmic shuttling of TBX5. Acts as a negative regulator of centrosome amplification by mediating acetylation of PLK4. Acetylates RRP9/U3-55K, a core subunit of the U3 snoRNP complex, impairing pre-rRNA processing. Acetylates MAPRE1/EB1, promoting dynamic kinetochore-microtubule interactions in early mitosis. Also acetylates spermidine. This chain is Histone acetyltransferase KAT2B, found in Mus musculus (Mouse).